A 385-amino-acid chain; its full sequence is Probable thioesterase PNKD (385 aa).

The segment at 32 to 58 (KASHNRTRALQSHSSPEGKEEPEPLSP) is disordered. Zn(2+) contacts are provided by H172, H174, D176, H177, H229, D253, and H291.

This sequence belongs to the metallo-beta-lactamase superfamily. Glyoxalase II family. As to quaternary structure, isoform 2 interacts with the sarcomeric proteins, MRLC2, MYOM1 and ENO3. The cofactor is Zn(2+). Undergoes cleavage at the N-terminus. In terms of tissue distribution, isoform 1 is only expressed in the brain. Isoform 2 is ubiquitously detected with highest expression in skeletal muscle and detected in myocardial myofibrils.

The protein resides in the cell membrane. It is found in the mitochondrion. It localises to the cytoplasm. The protein localises to the golgi apparatus. Its subcellular location is the endoplasmic reticulum. It carries out the reaction a thioester + H2O = a thiol + a carboxylate + H(+). Its function is as follows. Probable thioesterase that may play a role in cellular detoxification processes; it likely acts on a yet-unknown alpha-hydroxythioester substrate. In vitro, it is able to catalyze the hydrolysis of S-D-lactoyl-glutathione to form glutathione and D-lactic acid at very low rate, though this reaction is not physiologically relevant in vivo. The protein is Probable thioesterase PNKD (PNKD) of Homo sapiens (Human).